The following is a 287-amino-acid chain: Probable phosphite transport system-binding protein PtxB (287 aa).

Positions 1 to 23 (MKRLSALLLTCLLSAVSSLSALA) are cleaved as a signal peptide.

This sequence belongs to the phosphate/phosphite/phosphonate binding protein family.

Functionally, probably forms part of a binding-protein-dependent phosphite transporter. Required for oxidation of phosphite to phosphate. In Stutzerimonas stutzeri (Pseudomonas stutzeri), this protein is Probable phosphite transport system-binding protein PtxB (ptxB).